The following is a 252-amino-acid chain: Pyridoxine 5'-phosphate synthase (252 aa).

Asparagine 8 and arginine 19 together coordinate 3-amino-2-oxopropyl phosphate. Histidine 44 acts as the Proton acceptor in catalysis. 2 residues coordinate 1-deoxy-D-xylulose 5-phosphate: arginine 46 and histidine 51. The active-site Proton acceptor is glutamate 75. Threonine 110 contributes to the 1-deoxy-D-xylulose 5-phosphate binding site. The active-site Proton donor is the histidine 201. Residues aspartate 202 and glycine 224–histidine 225 each bind 3-amino-2-oxopropyl phosphate.

This sequence belongs to the PNP synthase family. In terms of assembly, homooctamer; tetramer of dimers.

Its subcellular location is the cytoplasm. It carries out the reaction 3-amino-2-oxopropyl phosphate + 1-deoxy-D-xylulose 5-phosphate = pyridoxine 5'-phosphate + phosphate + 2 H2O + H(+). The protein operates within cofactor biosynthesis; pyridoxine 5'-phosphate biosynthesis; pyridoxine 5'-phosphate from D-erythrose 4-phosphate: step 5/5. Catalyzes the complicated ring closure reaction between the two acyclic compounds 1-deoxy-D-xylulose-5-phosphate (DXP) and 3-amino-2-oxopropyl phosphate (1-amino-acetone-3-phosphate or AAP) to form pyridoxine 5'-phosphate (PNP) and inorganic phosphate. In Albidiferax ferrireducens (strain ATCC BAA-621 / DSM 15236 / T118) (Rhodoferax ferrireducens), this protein is Pyridoxine 5'-phosphate synthase.